Consider the following 433-residue polypeptide: Mitochondrial inner membrane protein OXA1L (433 aa).

Over 1 to 108 the chain is Mitochondrial intermembrane; that stretch reads MARNLVCGRW…QCATEPSFTE (108 aa). The helical transmembrane segment at 109–129 threads the bilayer; the sequence is LGLGSYTPVGLIQNLLEYIHV. At 130-134 the chain is on the mitochondrial matrix side; that stretch reads DLGLP. A helical transmembrane segment spans residues 135–155; that stretch reads WWGAIATCTVLARCLVFPLIV. The Mitochondrial intermembrane portion of the chain corresponds to 156–207; the sequence is KGQREAAKIHNHMPEMQKFSARIREAKLAGDQAEFYKATIEMTRYQKKHDIK. Residues 208-228 form a helical membrane-spanning segment; sequence LLRPLILPLTQAPVFISFFIA. Over 229–255 the chain is Mitochondrial matrix; it reads LREMANLPVPSLQTGGLWWFQDLTVSD. Residues 256 to 276 traverse the membrane as a helical segment; the sequence is PIYVLPLVVTATMWCVLELGA. At 277–293 the chain is on the mitochondrial intermembrane side; the sequence is ETGVQSNDLQFMRNIIR. A helical transmembrane segment spans residues 294-314; that stretch reads VMPLVVLPVTIHFPSAVFMYW. Residues 315-433 are Mitochondrial matrix-facing; sequence LSSNVFSLCQ…AKKPWQDTLG (119 aa). Position 359 is a phosphoserine (Ser359). A phosphothreonine mark is found at Thr395 and Thr397. A disordered region spans residues 397–433; sequence THNPLLQHDPSHPPKAPNSNNSSIKANAKKPWQDTLG. The segment covering 413–426 has biased composition (low complexity); that stretch reads PNSNNSSIKANAKK.

The protein belongs to the OXA1/ALB3/YidC family. In terms of assembly, monomer; predominantly monomeric at low salt concentrations. Homooligomer; predominantly homooligomeric at high salt concentrations. Associates with the mitochondrial ribosome. Associates preferentially as a dimer with the large ribosomal subunit 39S of the mitochondrial ribosome. Interacts with OXA1L; promoting cotranslational quality control in mitochondria.

The protein resides in the mitochondrion inner membrane. In terms of biological role, mitochondrial membrane insertase that mediates the cotranslational insertion of integral membrane proteins into the mitochondrial inner membrane. Essential for the activity and assembly of cytochrome oxidase. Required for the correct biogenesis of ATP synthase and complex I in mitochondria. The sequence is that of Mitochondrial inner membrane protein OXA1L (Oxa1l) from Mus musculus (Mouse).